The following is a 329-amino-acid chain: Malate dehydrogenase (329 aa).

NAD(+) is bound at residue 12 to 18 (GAAGQIG). Arg-95 and Arg-101 together coordinate substrate. Residues Asn-108, Gln-115, and 132 to 134 (VGN) contribute to the NAD(+) site. The substrate site is built by Asn-134 and Arg-165. The Proton acceptor role is filled by His-190.

Belongs to the LDH/MDH superfamily. MDH type 2 family.

It catalyses the reaction (S)-malate + NAD(+) = oxaloacetate + NADH + H(+). Catalyzes the reversible oxidation of malate to oxaloacetate. This is Malate dehydrogenase from Ralstonia nicotianae (strain ATCC BAA-1114 / GMI1000) (Ralstonia solanacearum).